A 68-amino-acid chain; its full sequence is Large ribosomal subunit protein bL33c (68 aa).

This sequence belongs to the bacterial ribosomal protein bL33 family.

The protein localises to the plastid. The protein resides in the chloroplast. The chain is Large ribosomal subunit protein bL33c from Pinus koraiensis (Korean pine).